Reading from the N-terminus, the 167-residue chain is Endothelin-3 (167 aa).

The N-terminal stretch at 1 to 19 (MELGLWLLLGLTVTSAAAA) is a signal peptide. Residues 20 to 50 (LPAQPGNAGQERGPGRSGDQEEKRVPAHHRP) constitute a propeptide that is removed on maturation. The disordered stretch occupies residues 22–45 (AQPGNAGQERGPGRSGDQEEKRVP). 2 cysteine pairs are disulfide-bonded: Cys53–Cys67 and Cys55–Cys63. The propeptide occupies 74–167 (INTPEQTVPY…KSRTDKVHQP (94 aa)). The interval 85 to 112 (LSNHRGSLRGKRSSGPVPESSQSSPQTR) is disordered. The span at 97 to 109 (SSGPVPESSQSSP) shows a compositional bias: low complexity. Positions 115-135 (CACSGVDDKACAYFCAHVTSY) are endothelin-like. Over residues 140–149 (EKAAAEEKQE) the composition is skewed to basic and acidic residues. The interval 140-167 (EKAAAEEKQETGGPRQRLKSRTDKVHQP) is disordered.

The protein belongs to the endothelin/sarafotoxin family.

The protein localises to the secreted. Its function is as follows. Endothelins are endothelium-derived vasoconstrictor peptides. The chain is Endothelin-3 (Edn3) from Rattus norvegicus (Rat).